A 334-amino-acid chain; its full sequence is HTH-type transcriptional repressor PurR (334 aa).

Residues 2–56 enclose the HTH lacI-type domain; it reads ATIKDVARMAGVSTTTVSHVINKTRFVAEATQKKVLAAVDDLNYAPSAVARSLKC. The segment at residues 4 to 23 is a DNA-binding region (H-T-H motif); the sequence is IKDVARMAGVSTTTVSHVIN. Residues 48–56 mediate DNA binding; the sequence is SAVARSLKC. Hypoxanthine-binding residues include Phe73, Lys189, Thr191, Phe220, and Asp274.

Homodimer.

It participates in purine metabolism; purine nucleotide biosynthesis [regulation]. Is the main repressor of the genes involved in the de novo synthesis of purine nucleotides, regulating purB, purC, purEK, purF, purHD, purL, purMN and guaBA expression. PurR is allosterically activated to bind its cognate DNA by binding the purine corepressors, hypoxanthine or guanine, thereby effecting transcription repression. The chain is HTH-type transcriptional repressor PurR from Photobacterium profundum (strain SS9).